A 344-amino-acid chain; its full sequence is Methionine import ATP-binding protein MetN (344 aa).

Positions isoleucine 2 to isoleucine 241 constitute an ABC transporter domain. Glycine 38–serine 45 lines the ATP pocket.

Belongs to the ABC transporter superfamily. Methionine importer (TC 3.A.1.24) family. As to quaternary structure, the complex is composed of two ATP-binding proteins (MetN), two transmembrane proteins (MetI) and a solute-binding protein (MetQ).

The protein resides in the cell inner membrane. The catalysed reaction is L-methionine(out) + ATP + H2O = L-methionine(in) + ADP + phosphate + H(+). It carries out the reaction D-methionine(out) + ATP + H2O = D-methionine(in) + ADP + phosphate + H(+). Functionally, part of the ABC transporter complex MetNIQ involved in methionine import. Responsible for energy coupling to the transport system. This Aliivibrio fischeri (strain ATCC 700601 / ES114) (Vibrio fischeri) protein is Methionine import ATP-binding protein MetN.